We begin with the raw amino-acid sequence, 170 residues long: Interferon gamma (170 aa).

Positions 1–20 (MNSRLCIMALLLCFSQALLG) are cleaved as a signal peptide. Residues Asn36 and Asn103 are each glycosylated (N-linked (GlcNAc...) asparagine).

The protein belongs to the type II (or gamma) interferon family. As to quaternary structure, homodimer. Interacts with IFNGR1 (via extracellular domain); this interaction promotes IFNGR1 dimerization. In terms of tissue distribution, released primarily from activated T lymphocytes.

The protein resides in the secreted. Its function is as follows. Type II interferon produced by immune cells such as T-cells and NK cells that plays crucial roles in antimicrobial, antiviral, and antitumor responses by activating effector immune cells and enhancing antigen presentation. Primarily signals through the JAK-STAT pathway after interaction with its receptor IFNGR1 to affect gene regulation. Upon IFNG binding, IFNGR1 intracellular domain opens out to allow association of downstream signaling components JAK2, JAK1 and STAT1, leading to STAT1 activation, nuclear translocation and transcription of IFNG-regulated genes. Many of the induced genes are transcription factors such as IRF1 that are able to further drive regulation of a next wave of transcription. Plays a role in class I antigen presentation pathway by inducing a replacement of catalytic proteasome subunits with immunoproteasome subunits. In turn, increases the quantity, quality, and repertoire of peptides for class I MHC loading. Increases the efficiency of peptide generation also by inducing the expression of activator PA28 that associates with the proteasome and alters its proteolytic cleavage preference. Up-regulates as well MHC II complexes on the cell surface by promoting expression of several key molecules such as cathepsins B/CTSB, H/CTSH, and L/CTSL. Participates in the regulation of hematopoietic stem cells during development and under homeostatic conditions by affecting their development, quiescence, and differentiation. This chain is Interferon gamma (IFNG), found in Sigmodon hispidus (Hispid cotton rat).